A 394-amino-acid chain; its full sequence is Phosphoglycerate kinase (394 aa).

Residues 21-23, Arg-36, 59-62, Arg-118, and Arg-151 contribute to the substrate site; these read DFN and HLGR. The residue at position 183 (Ser-183) is a Phosphoserine. ATP is bound by residues Lys-201 and Gly-292. Residue Thr-299 is modified to Phosphothreonine. ATP-binding positions include Glu-323 and 350–353; that span reads GGDS.

Belongs to the phosphoglycerate kinase family. Monomer.

The protein localises to the cytoplasm. It carries out the reaction (2R)-3-phosphoglycerate + ATP = (2R)-3-phospho-glyceroyl phosphate + ADP. The protein operates within carbohydrate degradation; glycolysis; pyruvate from D-glyceraldehyde 3-phosphate: step 2/5. The protein is Phosphoglycerate kinase of Bacillus anthracis (strain A0248).